The primary structure comprises 482 residues: tRNA sulfurtransferase (482 aa).

One can recognise a THUMP domain in the interval 61–165; the sequence is NQVLTAVTHT…NEKLNLVIAR (105 aa). ATP contacts are provided by residues 183–184, lysine 265, glycine 287, and glutamine 296; that span reads LI. Residues cysteine 344 and cysteine 456 are joined by a disulfide bond. Residues 404-482 form the Rhodanese domain; that stretch reads LGSDVVVLDI…GYKNVKVYRP (79 aa). Cysteine 456 serves as the catalytic Cysteine persulfide intermediate.

It belongs to the ThiI family.

Its subcellular location is the cytoplasm. The catalysed reaction is [ThiI sulfur-carrier protein]-S-sulfanyl-L-cysteine + a uridine in tRNA + 2 reduced [2Fe-2S]-[ferredoxin] + ATP + H(+) = [ThiI sulfur-carrier protein]-L-cysteine + a 4-thiouridine in tRNA + 2 oxidized [2Fe-2S]-[ferredoxin] + AMP + diphosphate. It catalyses the reaction [ThiS sulfur-carrier protein]-C-terminal Gly-Gly-AMP + S-sulfanyl-L-cysteinyl-[cysteine desulfurase] + AH2 = [ThiS sulfur-carrier protein]-C-terminal-Gly-aminoethanethioate + L-cysteinyl-[cysteine desulfurase] + A + AMP + 2 H(+). It participates in cofactor biosynthesis; thiamine diphosphate biosynthesis. Its function is as follows. Catalyzes the ATP-dependent transfer of a sulfur to tRNA to produce 4-thiouridine in position 8 of tRNAs, which functions as a near-UV photosensor. Also catalyzes the transfer of sulfur to the sulfur carrier protein ThiS, forming ThiS-thiocarboxylate. This is a step in the synthesis of thiazole, in the thiamine biosynthesis pathway. The sulfur is donated as persulfide by IscS. This is tRNA sulfurtransferase from Aliivibrio salmonicida (strain LFI1238) (Vibrio salmonicida (strain LFI1238)).